A 175-amino-acid polypeptide reads, in one-letter code: Diacylglycerol kinase (175 aa).

Transmembrane regions (helical) follow at residues V55–A75 and L96–I116. Catalysis depends on E118, which acts as the Proton acceptor. E125 contributes to the a divalent metal cation binding site. Residues V151–L171 traverse the membrane as a helical segment.

It belongs to the bacterial diacylglycerol kinase family. It depends on Mg(2+) as a cofactor.

It is found in the cell membrane. The enzyme catalyses a 1,2-diacyl-sn-glycerol + ATP = a 1,2-diacyl-sn-glycero-3-phosphate + ADP + H(+). Its function is as follows. Catalyzes the ATP-dependent phosphorylation of sn-l,2-diacylglycerol (DAG) to phosphatidic acid. The polypeptide is Diacylglycerol kinase (dgkA) (Synechocystis sp. (strain ATCC 27184 / PCC 6803 / Kazusa)).